Consider the following 205-residue polypeptide: GTP cyclohydrolase-2 (205 aa).

49 to 53 (RIHSE) contacts GTP. Zn(2+)-binding residues include Cys54, Cys65, and Cys67. GTP contacts are provided by residues Gln70, 92–94 (EGR), and Thr114. Catalysis depends on Asp126, which acts as the Proton acceptor. The active-site Nucleophile is Arg128. The GTP site is built by Thr149 and Lys154.

It belongs to the GTP cyclohydrolase II family. The cofactor is Zn(2+).

The enzyme catalyses GTP + 4 H2O = 2,5-diamino-6-hydroxy-4-(5-phosphoribosylamino)-pyrimidine + formate + 2 phosphate + 3 H(+). Its pathway is cofactor biosynthesis; riboflavin biosynthesis; 5-amino-6-(D-ribitylamino)uracil from GTP: step 1/4. Its function is as follows. Catalyzes the conversion of GTP to 2,5-diamino-6-ribosylamino-4(3H)-pyrimidinone 5'-phosphate (DARP), formate and pyrophosphate. The protein is GTP cyclohydrolase-2 of Shewanella loihica (strain ATCC BAA-1088 / PV-4).